The sequence spans 362 residues: Methylthioribose-1-phosphate isomerase (362 aa).

Residues 49-51 (RGA), arginine 89, and glutamine 201 each bind substrate. The active-site Proton donor is the aspartate 242. Position 252–253 (252–253 (NK)) interacts with substrate.

It belongs to the eIF-2B alpha/beta/delta subunits family. MtnA subfamily.

It catalyses the reaction 5-(methylsulfanyl)-alpha-D-ribose 1-phosphate = 5-(methylsulfanyl)-D-ribulose 1-phosphate. It functions in the pathway amino-acid biosynthesis; L-methionine biosynthesis via salvage pathway; L-methionine from S-methyl-5-thio-alpha-D-ribose 1-phosphate: step 1/6. Its function is as follows. Catalyzes the interconversion of methylthioribose-1-phosphate (MTR-1-P) into methylthioribulose-1-phosphate (MTRu-1-P). The protein is Methylthioribose-1-phosphate isomerase of Leptospira borgpetersenii serovar Hardjo-bovis (strain JB197).